The primary structure comprises 239 residues: Ribonuclease PH (239 aa).

Residues arginine 87 and 125–127 (GTR) contribute to the phosphate site.

This sequence belongs to the RNase PH family. Homohexameric ring arranged as a trimer of dimers.

The catalysed reaction is tRNA(n+1) + phosphate = tRNA(n) + a ribonucleoside 5'-diphosphate. Its function is as follows. Phosphorolytic 3'-5' exoribonuclease that plays an important role in tRNA 3'-end maturation. Removes nucleotide residues following the 3'-CCA terminus of tRNAs; can also add nucleotides to the ends of RNA molecules by using nucleoside diphosphates as substrates, but this may not be physiologically important. Probably plays a role in initiation of 16S rRNA degradation (leading to ribosome degradation) during starvation. This is Ribonuclease PH from Ectopseudomonas mendocina (strain ymp) (Pseudomonas mendocina).